The chain runs to 467 residues: MTSWAEKYRPKNLDGILGNAKAVSELRAWAMAWEKGRPEVKCLILYGPPGVGKTSAALALASEMDWDYIELNASDQRTAEIIKSIAGPASQVSTFSGRRRLVILDEADNLHGTYDRGGAAAILRVIKNATQPVILIANEYYNIEKPLRDACRGVQFRSIRAQTIASLLREICRSEGIECEPEAVMHIAAMSGGDLRSAINDLEAAARGLKHLRLEDVATSERDVKASIFRVLDSIFKGEDSRSALEATYQLDESPEDLIHWIDENLPIVYKDRELAKGFECLSRADIFLGRVRRRQNYTLWRYAAFLMTGGVRAVSSKVRRGYTQFRPPSLWKRLGQTRKARSVRDSAARKIAAHCHVSTSYARSELLNFVGALLRSKKTGAAVAASLGLNIEEIALLTGSSPTTKKVQKLFEDAQKIIEAEQIAMIDRGLKIVDREIEKPEDKAMKYASVSKEIVQEKRQRSLFDF.

ATP is bound at residue 47-54 (GPPGVGKT).

The protein belongs to the activator 1 small subunits family. RfcL subfamily. Heteromultimer composed of small subunits (RfcS) and large subunits (RfcL).

In terms of biological role, part of the RFC clamp loader complex which loads the PCNA sliding clamp onto DNA. The chain is Replication factor C large subunit from Methanothrix thermoacetophila (strain DSM 6194 / JCM 14653 / NBRC 101360 / PT) (Methanosaeta thermophila).